The primary structure comprises 106 residues: Large ribosomal subunit protein P2A (106 aa).

A Glycyl lysine isopeptide (Lys-Gly) (interchain with G-Cter in ubiquitin) cross-link involves residue K2. T16 is modified (phosphothreonine). Phosphoserine occurs at positions 40 and 43. Residue K48 forms a Glycyl lysine isopeptide (Lys-Gly) (interchain with G-Cter in ubiquitin) linkage. S49 carries the phosphoserine modification. The span at 65–82 (PAAGPASAGGAAAASGDA) shows a compositional bias: low complexity. Residues 65-106 (PAAGPASAGGAAAASGDAAAEEEKEEEAAEESDDDMGFGLFD) form a disordered region. The span at 83-100 (AAEEEKEEEAAEESDDDM) shows a compositional bias: acidic residues. S96 bears the Phosphoserine mark.

It belongs to the eukaryotic ribosomal protein P1/P2 family. Component of the large ribosomal subunit (LSU). Mature yeast ribosomes consist of a small (40S) and a large (60S) subunit. The 40S small subunit contains 1 molecule of ribosomal RNA (18S rRNA) and 33 different proteins (encoded by 57 genes). The large 60S subunit contains 3 rRNA molecules (25S, 5.8S and 5S rRNA) and 46 different proteins (encoded by 81 genes). The 5 acidic ribosomal P-proteins form the stalk structure of the 60S subunit. They are organized as a pentameric complex in which uL10/P0 interacts with 2 heterodimers, P1A-P2B and P1B-P2A. Post-translationally, phosphorylation is not involved in the interaction of the acidic P proteins with the ribosome, however it is suggested to affect the ribosome activity and to participate in a possible ribosome regulatory mechanism. In terms of processing, the N-terminus is not modified.

It localises to the cytoplasm. Functionally, component of the ribosome, a large ribonucleoprotein complex responsible for the synthesis of proteins in the cell. The small ribosomal subunit (SSU) binds messenger RNAs (mRNAs) and translates the encoded message by selecting cognate aminoacyl-transfer RNA (tRNA) molecules. The large subunit (LSU) contains the ribosomal catalytic site termed the peptidyl transferase center (PTC), which catalyzes the formation of peptide bonds, thereby polymerizing the amino acids delivered by tRNAs into a polypeptide chain. The nascent polypeptides leave the ribosome through a tunnel in the LSU and interact with protein factors that function in enzymatic processing, targeting, and the membrane insertion of nascent chains at the exit of the ribosomal tunnel. This Saccharomyces cerevisiae (strain ATCC 204508 / S288c) (Baker's yeast) protein is Large ribosomal subunit protein P2A.